Reading from the N-terminus, the 508-residue chain is Aldehyde dehydrogenase family 7 member B4 (508 aa).

NAD(+) is bound at residue 244–249 (GSSRVG). The Proton acceptor role is filled by E266. C300 serves as the catalytic Nucleophile.

This sequence belongs to the aldehyde dehydrogenase family. In terms of assembly, homotetramer.

It catalyses the reaction an aldehyde + NAD(+) + H2O = a carboxylate + NADH + 2 H(+). The sequence is that of Aldehyde dehydrogenase family 7 member B4 (ALDH7B4) from Arabidopsis thaliana (Mouse-ear cress).